Consider the following 201-residue polypeptide: Large ribosomal subunit protein bL25 (201 aa).

The interval valine 179–glutamate 201 is disordered. Acidic residues predominate over residues lysine 190–glutamate 201.

This sequence belongs to the bacterial ribosomal protein bL25 family. CTC subfamily. Part of the 50S ribosomal subunit; part of the 5S rRNA/L5/L18/L25 subcomplex. Contacts the 5S rRNA. Binds to the 5S rRNA independently of L5 and L18.

This is one of the proteins that binds to the 5S RNA in the ribosome where it forms part of the central protuberance. This is Large ribosomal subunit protein bL25 from Prosthecochloris aestuarii (strain DSM 271 / SK 413).